A 378-amino-acid polypeptide reads, in one-letter code: Glutamate 5-kinase (378 aa).

K20 contacts ATP. Substrate contacts are provided by S60, D147, and N159. Residues 179-180 (TD) and 221-227 (TGGMATK) each bind ATP. One can recognise a PUA domain in the interval 286-364 (AGDIVIDAGA…QEIYKVLGYE (79 aa)).

The protein belongs to the glutamate 5-kinase family.

It is found in the cytoplasm. The catalysed reaction is L-glutamate + ATP = L-glutamyl 5-phosphate + ADP. It participates in amino-acid biosynthesis; L-proline biosynthesis; L-glutamate 5-semialdehyde from L-glutamate: step 1/2. Its function is as follows. Catalyzes the transfer of a phosphate group to glutamate to form L-glutamate 5-phosphate. The sequence is that of Glutamate 5-kinase from Photobacterium profundum (strain SS9).